Reading from the N-terminus, the 47-residue chain is Zinc-finger protein TK0143 (47 aa).

The C2H2-type zinc-finger motif lies at 18-41 (FRCPRCGMVFRSAKAYTRHVNKAH). Zn(2+) is bound by residues cysteine 20, cysteine 23, histidine 36, and histidine 41.

Crystallized in association with 70S ribosomes. Zn(2+) serves as cofactor.

The sequence is that of Zinc-finger protein TK0143 from Thermococcus kodakarensis (strain ATCC BAA-918 / JCM 12380 / KOD1) (Pyrococcus kodakaraensis (strain KOD1)).